The chain runs to 47 residues: Small ribosomal subunit protein uS14 (47 aa).

The Zn(2+) site is built by C12, C15, C30, and C33.

It belongs to the universal ribosomal protein uS14 family. Zinc-binding uS14 subfamily. Part of the 30S ribosomal subunit. The cofactor is Zn(2+).

Functionally, binds 16S rRNA, required for the assembly of 30S particles. The chain is Small ribosomal subunit protein uS14 from Methanosphaera stadtmanae (strain ATCC 43021 / DSM 3091 / JCM 11832 / MCB-3).